The sequence spans 413 residues: MYKLMKNIQTTALNRTTLMFPLALVLFEFAVYIGNDLIQPAMLAITEDFGVSATWAPSSMSFYLLGGASVAWLLGPLSDRLGRKKVLLSGVLFFALCCFLILLTRQIEHFLTLRFLQGIGLSVISAVGYAAIQENFAERDAIKVMALMANISLLAPLLGPVLGAFLIDYVSWHWGFVAIALLALLSWVGLKKQMPSHKVSVTKQPFSYLFDDFKKVFSNRQFLGLTLALPLVGMPLMLWIALSPIILVDELKLTSVQYGLAQFPVFLGLIVGNIVLIKIIDRLALGKTVLIGLPIMLTGTLILILGVVWQAYLIPCLLIGMTLICFGEGISFSVLYRFALMSSEVSKGTVAAAVSMLLMTSFFAMIELVRYLYTQFHLWAFVLSAFAFIALWFTQPRLALKREMQERVAQDLH.

12 helical membrane-spanning segments follow: residues 18–38 (LMFP…NDLI), 55–75 (WAPS…WLLG), 84–104 (KKVL…ILLT), 110–130 (FLTL…VGYA), 147–167 (LMAN…AFLI), 170–190 (VSWH…WVGL), 228–248 (ALPL…IILV), 260–280 (LAQF…IKII), 289–309 (VLIG…GVVW), 312–332 (YLIP…GISF), 349–369 (TVAA…IELV), and 373–393 (YTQF…ALWF).

It belongs to the major facilitator superfamily.

It is found in the cell inner membrane. Functionally, efflux pump that mediates resistance to chloramphenicol. The protein is Chloramphenicol resistance protein CraA of Acinetobacter baumannii (strain ATCC 19606 / DSM 30007 / JCM 6841 / CCUG 19606 / CIP 70.34 / NBRC 109757 / NCIMB 12457 / NCTC 12156 / 81).